The sequence spans 161 residues: S-ribosylhomocysteine lyase (161 aa).

Positions 57, 61, and 127 each coordinate Fe cation.

It belongs to the LuxS family. Homodimer. It depends on Fe cation as a cofactor.

The enzyme catalyses S-(5-deoxy-D-ribos-5-yl)-L-homocysteine = (S)-4,5-dihydroxypentane-2,3-dione + L-homocysteine. Involved in the synthesis of autoinducer 2 (AI-2) which is secreted by bacteria and is used to communicate both the cell density and the metabolic potential of the environment. The regulation of gene expression in response to changes in cell density is called quorum sensing. Catalyzes the transformation of S-ribosylhomocysteine (RHC) to homocysteine (HC) and 4,5-dihydroxy-2,3-pentadione (DPD). The polypeptide is S-ribosylhomocysteine lyase (Streptococcus equi subsp. zooepidemicus (strain H70)).